Consider the following 120-residue polypeptide: Chaperonin GroEL (120 aa).

23–27 (DGTTT) contributes to the ATP binding site.

Belongs to the chaperonin (HSP60) family. In terms of assembly, forms a cylinder of 14 subunits composed of two heptameric rings stacked back-to-back. Interacts with the co-chaperonin GroES.

The protein localises to the cytoplasm. The enzyme catalyses ATP + H2O + a folded polypeptide = ADP + phosphate + an unfolded polypeptide.. Its function is as follows. Together with its co-chaperonin GroES, plays an essential role in assisting protein folding. The GroEL-GroES system forms a nano-cage that allows encapsulation of the non-native substrate proteins and provides a physical environment optimized to promote and accelerate protein folding. This chain is Chaperonin GroEL, found in Mycobacterium asiaticum.